A 397-amino-acid chain; its full sequence is Serpin-Z7 (397 aa).

N-acetylalanine is present on alanine 2. The segment at 344-368 (GTKAGAATGDVIVDRSLPIRMDFVA) is RCL.

This sequence belongs to the serpin family. In terms of tissue distribution, highly expressed in endosperm, at intermediate level in embryo and at lower levels in roots.

Inhibits chymotrypsin in vitro. In Hordeum vulgare (Barley), this protein is Serpin-Z7 (PAZ7).